The primary structure comprises 330 residues: Taste receptor type 2 member 117 (330 aa).

Topologically, residues 1-16 (MKHFWKILSVISQSTL) are extracellular. Residues 17–37 (SVILIVELVIGIIGNGFMVLV) form a helical membrane-spanning segment. The Cytoplasmic segment spans residues 38-53 (HCMDWVKKKKMSLVNQ). The chain crosses the membrane as a helical span at residues 54–74 (ILTALSISRIFQLCLLFISLV). Residues 75 to 95 (INFSYTDLTTSSRMIQVMYNA) lie on the Extracellular side of the membrane. Residue N76 is glycosylated (N-linked (GlcNAc...) asparagine). The chain crosses the membrane as a helical span at residues 96 to 116 (WILANHFSIWIATCLTVLYFL). Residues 117 to 135 (KIANFSNSFFLYLKWRVEK) are Cytoplasmic-facing. A helical transmembrane segment spans residues 136–156 (VVSVTLLVSLLLLILNILLTN). The Extracellular segment spans residues 157-190 (LETDMWTNEYQRNISCSFSSHYYAKCHRQVLRLH). Residue N169 is glycosylated (N-linked (GlcNAc...) asparagine). A helical membrane pass occupies residues 191–211 (IIFLSVPVVLSLSTFLLLIFS). The Cytoplasmic segment spans residues 212 to 239 (LWTHHKRMQQHVQGGRDARTTAHFKALQ). Residues 240 to 260 (TVIAFFLLYSIFILSVLIQIW) traverse the membrane as a helical segment. Residues 261 to 269 (KYELLKKNL) lie on the Extracellular side of the membrane. The helical transmembrane segment at 270-290 (FVVFCEVVYIAFPTFHSYILI) threads the bilayer. The Cytoplasmic portion of the chain corresponds to 291–330 (VGDMKLRQACLPLCIIAAEIQTTLCRNFRSLKYFRLCCIF).

It belongs to the G-protein coupled receptor T2R family.

It localises to the membrane. Its function is as follows. Putative taste receptor which may play a role in the perception of bitterness. The chain is Taste receptor type 2 member 117 from Mus musculus (Mouse).